Consider the following 432-residue polypeptide: Bifunctional IPC transferase and DIPP synthase (432 aa).

A mobA-like NTP transferase region spans residues 3–225 (PERAVILAAG…RARRMLVRTA (223 aa)). CTP is bound by residues 9–11 (LAA), lysine 22, and glutamate 113. A Mg(2+)-binding site is contributed by glutamate 113. The interval 226-426 (VKGTGDGFVS…LTLYFVVKKV (201 aa)) is CDP-alcohol phosphatidyltransferases. 3 consecutive transmembrane segments (helical) span residues 264-284 (FLLGIISALTTLVSLPLAGIL), 337-356 (IWYFVALLALLGSVMVSYST), and 385-405 (VFLTMLFLLYQIAASIKALFL).

This sequence in the N-terminal section; belongs to the MobA family. The protein in the C-terminal section; belongs to the CDP-alcohol phosphatidyltransferase class-I family. The cofactor is Mg(2+).

It localises to the membrane. The catalysed reaction is 1D-myo-inositol 3-phosphate + CTP + H(+) = CDP-1L-myo-inositol + diphosphate. It carries out the reaction CDP-1L-myo-inositol + 1D-myo-inositol 3-phosphate = bis(1L-myo-inositol) 3,1'-phosphate 1-phosphate + CMP + H(+). Involved in biosynthesis of di-myo-inositol phosphate (DIP), a widespread organic solute in microorganisms adapted to hot environments. Catalyzes the condensation of CTP and L-myo-inositol-1-phosphate into CDP-L-myo-inositol, as well as the biosynthesis of di-myo-inositol-1,3'-phosphate-1'-phosphate (DIPP) from CDP-L-myo-inositol and L-myo-inositol-1-phosphate. The chain is Bifunctional IPC transferase and DIPP synthase from Thermococcus kodakarensis (strain ATCC BAA-918 / JCM 12380 / KOD1) (Pyrococcus kodakaraensis (strain KOD1)).